The following is a 216-amino-acid chain: Octanoyltransferase (216 aa).

In terms of domain architecture, BPL/LPL catalytic spans 35 to 213 (NSNPDFIWIG…IIQEEFNFDF (179 aa)). Residues 77–84 (RGGEVTCH), 144–146 (SIG), and 157–159 (GFS) each bind substrate. The Acyl-thioester intermediate role is filled by cysteine 175.

The protein belongs to the LipB family.

The protein resides in the cytoplasm. The enzyme catalyses octanoyl-[ACP] + L-lysyl-[protein] = N(6)-octanoyl-L-lysyl-[protein] + holo-[ACP] + H(+). Its pathway is protein modification; protein lipoylation via endogenous pathway; protein N(6)-(lipoyl)lysine from octanoyl-[acyl-carrier-protein]: step 1/2. In terms of biological role, catalyzes the transfer of endogenously produced octanoic acid from octanoyl-acyl-carrier-protein onto the lipoyl domains of lipoate-dependent enzymes. Lipoyl-ACP can also act as a substrate although octanoyl-ACP is likely to be the physiological substrate. The chain is Octanoyltransferase from Prochlorococcus marinus (strain MIT 9215).